A 1152-amino-acid chain; its full sequence is MSHIDGDDHMTKDLIDSLESKDNDLSLVTSNTQIPDVEVANLTHDADEINQLFDTATNNVLPESNKKDKPIDTQDLHEDDPKAVPKTTSNGESTSNSNSVSPKLLPNDGKSTPKIQKELRRKSTFVPVTSNSKSLEPSEDDNNNNNNNSRISAYARLDFENFTFFVQTLQVVLGRKSNDETLQQNVDVHLSSKKAISRRHAKIFYNFGTQRFEISILGRNGAFVDNVFVEKGLTIPLTDGNKIQIGDIPFKFVLPSNEPNEENNNQDSSEKQFNPSDAINLRSNLYSKSSSPQSSPKRKPQPSKKVKKEPVSASNTSKDIKPTPPVPTTAISPTASISTSTNAATAATATTPATTTAARKNSINRRNSLLKIRRLSNARRKSLAANDEINELLKDLGVTSIDEINEEDSELLDAQIQSLLDEDNENLGGIEDSLMKLAEFNESAIDDDDDDEEGNENSQADLDRLEKTMEHDAIDDEIKAIDSNLTLLDDEISKLTPLINDTNQGLLEEKETKKKQLEEEKRKKQLQQLQHKNSLAKFPRRSAPLMGKPASIQPPASSSIYSRINGLDKIGKTVSPRPPPPKLIAPVLRVTAEPSAIRSRPPLRAITVSDSSYIATFSYPKTIEEPSKYPKPKVKKEHHKKHSKKVYSLDEIPEPYRSKPNISFQIMITNVLKTEAARNGLIINEITEAIKEVYPYYKYCTDGWQFSINHCIKFTKIYKRLQKRGSEWLYAMDELYINERENIRIKQREIAKAKAKAEALRQEEIRQRQRLEAQKSLPHNIVGRNFASPYANTRVPPNQYNQFSQSSSSSSSSATTTTNGQYGSTTMVGGTSPQAGSIRAQLAAVRGNGNTPATTSTTPSLPAMNDPKTKKSLEYLQKELFTLYKARKLTYDTQTATSLITKAVATTIAQVNSIGAKAGAGDNALVFLVERAPEKVSKILDIALTKSIKEHEGIASKSPSQPATPGMRPEQLTTTSQSAATPTTTPQISNLQSLPVKPPISTPLPQVPQQQVSGVNIPGPIATPNIGVTSGVGNLGTTSIGTPTPTQIQSPATSVIPAMQSPQKPVSTPIPTSVPVPLPVPSAPLARPPSFGKPPGAGSSLSRPKAFGKPPGAGSSLSRPPTFLSNKPSYKRELEDDEEEGEQATNKIAKTE.

Residues 55–147 (TATNNVLPES…SEDDNNNNNN (93 aa)) form a disordered region. Basic and acidic residues predominate over residues 64 to 83 (SNKKDKPIDTQDLHEDDPKA). Positions 87-101 (TTSNGESTSNSNSVS) are enriched in low complexity. Polar residues predominate over residues 126 to 135 (VPVTSNSKSL). One can recognise an FHA domain in the interval 171–229 (VVLGRKSNDETLQQNVDVHLSSKKAISRRHAKIFYNFGTQRFEISILGRNGAFVDNVFV). Disordered stretches follow at residues 254 to 362 (LPSN…RKNS) and 514 to 557 (KKQL…PPAS). Positions 271 to 286 (KQFNPSDAINLRSNLY) are enriched in polar residues. Positions 296–307 (PKRKPQPSKKVK) are enriched in basic residues. Residues 328 to 358 (TTAISPTASISTSTNAATAATATTPATTTAA) show a composition bias toward low complexity. Coiled coils occupy residues 449–537 (DDDE…SLAK) and 734–777 (ELYI…QKSL). Residues 659 to 756 (KPNISFQIMI…QREIAKAKAK (98 aa)) constitute a DNA-binding region (fork-head). Disordered regions lie at residues 787-833 (ASPY…GTSP), 846-867 (RGNG…MNDP), 951-1010 (HEGI…VPQQ), and 1057-1152 (PAMQ…AKTE). 3 stretches are compositionally biased toward low complexity: residues 804–826 (SQSS…GSTT), 851–863 (TPAT…SLPA), and 973–987 (TTTS…TTPQ). Composition is skewed to pro residues over residues 996–1006 (VKPPISTPLPQ) and 1072–1082 (TSVPVPLPVPS). Polar residues-rich tracts occupy residues 1115–1128 (SSLS…SNKP) and 1143–1152 (QATNKIAKTE).

As to quaternary structure, interacts with IFH1 and TBF1.

Its subcellular location is the nucleus. In complex with IFH1, acts as a transcriptional regulator of rRNA and ribosomal protein genes. The FHL1-IFH1 complex is targeted to the ribosomal protein genes by the DNA-binding factor TBF1. This Candida albicans (strain SC5314 / ATCC MYA-2876) (Yeast) protein is Fork-head transcriptional regulator FHL1 (FHL1).